Consider the following 193-residue polypeptide: Inner membrane-spanning protein YciB (193 aa).

Transmembrane regions (helical) follow at residues 5–25 (TLDA…FYIY), 36–56 (IIAA…LMFV), 67–87 (WLVV…QDDF), 93–113 (APII…FLGG), 138–158 (VWVG…FVWV), and 164–184 (FTAF…FWFL).

This sequence belongs to the YciB family.

It is found in the cell inner membrane. Functionally, plays a role in cell envelope biogenesis, maintenance of cell envelope integrity and membrane homeostasis. In Vitreoscilla sp. (strain C1), this protein is Inner membrane-spanning protein YciB.